The primary structure comprises 182 residues: UPF0397 protein BCAH820_2657 (182 aa).

Transmembrane regions (helical) follow at residues 9–29 (VVAIGIGSALYGILGLWGFTI), 40–60 (AILTVFGALFGPVAGLLIGLI), 71–91 (WGIWWGWVISSGIIGFTMGFI), 114–134 (ITGLIGIVIAIIFAGAFDIIV), and 142–162 (IVIQVLGATIADVIVFLVLGL).

This sequence belongs to the UPF0397 family.

Its subcellular location is the cell membrane. The protein is UPF0397 protein BCAH820_2657 of Bacillus cereus (strain AH820).